A 251-amino-acid chain; its full sequence is Ubiquinone/menaquinone biosynthesis C-methyltransferase UbiE (251 aa).

S-adenosyl-L-methionine-binding positions include Thr-74, Asp-95, 123–124 (NA), and Ser-140.

This sequence belongs to the class I-like SAM-binding methyltransferase superfamily. MenG/UbiE family.

The enzyme catalyses a 2-demethylmenaquinol + S-adenosyl-L-methionine = a menaquinol + S-adenosyl-L-homocysteine + H(+). It carries out the reaction a 2-methoxy-6-(all-trans-polyprenyl)benzene-1,4-diol + S-adenosyl-L-methionine = a 5-methoxy-2-methyl-3-(all-trans-polyprenyl)benzene-1,4-diol + S-adenosyl-L-homocysteine + H(+). It participates in quinol/quinone metabolism; menaquinone biosynthesis; menaquinol from 1,4-dihydroxy-2-naphthoate: step 2/2. The protein operates within cofactor biosynthesis; ubiquinone biosynthesis. Functionally, methyltransferase required for the conversion of demethylmenaquinol (DMKH2) to menaquinol (MKH2) and the conversion of 2-polyprenyl-6-methoxy-1,4-benzoquinol (DDMQH2) to 2-polyprenyl-3-methyl-6-methoxy-1,4-benzoquinol (DMQH2). The sequence is that of Ubiquinone/menaquinone biosynthesis C-methyltransferase UbiE from Cronobacter sakazakii (strain ATCC BAA-894) (Enterobacter sakazakii).